The sequence spans 922 residues: Metabotropic glutamate receptor 7 (922 aa).

The first 34 residues, 1 to 34 (MVQLRKLLRVLTLMKFPCCVLEVLLCALAAAARG), serve as a signal peptide directing secretion. The Extracellular portion of the chain corresponds to 35–590 (QEMYAPHSIR…IIKLEWHSPW (556 aa)). Residues Cys67 and Cys109 are joined by a disulfide bond. N-linked (GlcNAc...) asparagine glycosylation is present at Asn98. L-glutamate contacts are provided by residues Ser159, 180 to 182 (AST), Tyr230, and Asp314. 7 cysteine pairs are disulfide-bonded: Cys249/Cys541, Cys374/Cys390, Cys430/Cys437, Cys523/Cys542, Cys527/Cys545, Cys548/Cys560, and Cys563/Cys576. Position 407 (Lys407) interacts with L-glutamate. Residues Asn458 and Asn486 are each glycosylated (N-linked (GlcNAc...) asparagine). Asn572 is a glycosylation site (N-linked (GlcNAc...) asparagine). Residues 591–615 (AVIPVFLAMLGIIATIFVMATFIRY) traverse the membrane as a helical segment. Over 616-627 (NDTPIVRASGRE) the chain is Cytoplasmic. Residues 628 to 648 (LSYVLLTGIFLCYIITFLMIA) traverse the membrane as a helical segment. Residues 649–654 (KPDVAV) are Extracellular-facing. The helical transmembrane segment at 655–675 (CSFRRVFLGLGMCISYAALLT) threads the bilayer. Residues 676–702 (KTNRIYRIFEQGKKSVTAPRLISPTSQ) lie on the Cytoplasmic side of the membrane. The helical transmembrane segment at 703-723 (LAITSSLISVQLLGVFIWFGV) threads the bilayer. Over 724–753 (DPPNIIIDYDEHKTMNPEQARGVLKCDITD) the chain is Extracellular. A helical transmembrane segment spans residues 754-775 (LQIICSLGYSILLMVTCTVYAI). Over 776–788 (KTRGVPENFNEAK) the chain is Cytoplasmic. Residues 789-810 (PIGFTMYTTCIVWLAFIPIFFG) form a helical membrane-spanning segment. At 811–825 (TAQSAEKLYIQTTTL) the chain is on the extracellular side. Residues 826 to 850 (TISMNLSASVALGMLYMPKVYIIIF) form a helical membrane-spanning segment. Residues 851 to 922 (HPELNVQKRK…VTWYTIPPTV (72 aa)) are Cytoplasmic-facing.

This sequence belongs to the G-protein coupled receptor 3 family. Homodimer. Interacts with PICK1.

The protein localises to the cell membrane. G-protein coupled receptor activated by glutamate that regulates axon outgrowth through the MAPK-cAMP-PKA signaling pathway during neuronal development. Ligand binding causes a conformation change that triggers signaling via guanine nucleotide-binding proteins (G proteins) and modulates the activity of downstream effectors, such as adenylate cyclase that it inhibits. This Pongo abelii (Sumatran orangutan) protein is Metabotropic glutamate receptor 7 (GRM7).